The sequence spans 236 residues: Peptidase E (236 aa).

Active-site charge relay system residues include Ser-122, Asp-137, and His-159.

Belongs to the peptidase S51 family.

Its subcellular location is the cytoplasm. The catalysed reaction is Dipeptidase E catalyzes the hydrolysis of dipeptides Asp-|-Xaa. It does not act on peptides with N-terminal Glu, Asn or Gln, nor does it cleave isoaspartyl peptides.. Functionally, hydrolyzes dipeptides containing N-terminal aspartate residues. May play a role in allowing the cell to use peptide aspartate to spare carbon otherwise required for the synthesis of the aspartate family of amino acids. The sequence is that of Peptidase E from Shewanella sp. (strain ANA-3).